The chain runs to 241 residues: ATP synthase subunit a (241 aa).

A run of 5 helical transmembrane segments spans residues 30–50 (GQVF…VLVG), 89–109 (LPFI…GALI), 128–148 (INTT…AGLS), 193–213 (LAVG…VMLL), and 214–234 (GLFT…FYIG).

It belongs to the ATPase A chain family. In terms of assembly, F-type ATPases have 2 components, CF(1) - the catalytic core - and CF(0) - the membrane proton channel. CF(1) has five subunits: alpha(3), beta(3), gamma(1), delta(1), epsilon(1). CF(0) has four main subunits: a, b, b' and c.

The protein resides in the cellular thylakoid membrane. Key component of the proton channel; it plays a direct role in the translocation of protons across the membrane. The polypeptide is ATP synthase subunit a (Synechococcus sp. (strain CC9902)).